Consider the following 565-residue polypeptide: Adenine deaminase (565 aa).

This sequence belongs to the metallo-dependent hydrolases superfamily. Adenine deaminase family. Mn(2+) serves as cofactor.

The catalysed reaction is adenine + H2O + H(+) = hypoxanthine + NH4(+). This Cereibacter sphaeroides (strain ATCC 17023 / DSM 158 / JCM 6121 / CCUG 31486 / LMG 2827 / NBRC 12203 / NCIMB 8253 / ATH 2.4.1.) (Rhodobacter sphaeroides) protein is Adenine deaminase.